A 469-amino-acid polypeptide reads, in one-letter code: Probable cobyric acid synthase (469 aa).

Residues 241–427 (SGSIGIVRYP…VHGILENNEF (187 aa)) enclose the GATase cobBQ-type domain. Cysteine 319 serves as the catalytic Nucleophile. Residue histidine 419 is part of the active site.

It belongs to the CobB/CobQ family. CobQ subfamily.

Its pathway is cofactor biosynthesis; adenosylcobalamin biosynthesis. Functionally, catalyzes amidations at positions B, D, E, and G on adenosylcobyrinic A,C-diamide. NH(2) groups are provided by glutamine, and one molecule of ATP is hydrogenolyzed for each amidation. This chain is Probable cobyric acid synthase, found in Picrophilus torridus (strain ATCC 700027 / DSM 9790 / JCM 10055 / NBRC 100828 / KAW 2/3).